The following is a 536-amino-acid chain: Light-independent protochlorophyllide reductase subunit B (536 aa).

Asp-36 provides a ligand contact to [4Fe-4S] cluster. Residue Asp-274 is the Proton donor of the active site. 409 to 410 provides a ligand contact to substrate; it reads GL. The segment at 426–448 is disordered; that stretch reads DEAGPSHHGGKAVPASAPRADEA.

Belongs to the ChlB/BchB/BchZ family. As to quaternary structure, protochlorophyllide reductase is composed of three subunits; BchL, BchN and BchB. Forms a heterotetramer of two BchB and two BchN subunits. It depends on [4Fe-4S] cluster as a cofactor.

It catalyses the reaction chlorophyllide a + oxidized 2[4Fe-4S]-[ferredoxin] + 2 ADP + 2 phosphate = protochlorophyllide a + reduced 2[4Fe-4S]-[ferredoxin] + 2 ATP + 2 H2O. It participates in porphyrin-containing compound metabolism; bacteriochlorophyll biosynthesis (light-independent). Its function is as follows. Component of the dark-operative protochlorophyllide reductase (DPOR) that uses Mg-ATP and reduced ferredoxin to reduce ring D of protochlorophyllide (Pchlide) to form chlorophyllide a (Chlide). This reaction is light-independent. The NB-protein (BchN-BchB) is the catalytic component of the complex. The sequence is that of Light-independent protochlorophyllide reductase subunit B from Cereibacter sphaeroides (strain KD131 / KCTC 12085) (Rhodobacter sphaeroides).